A 717-amino-acid polypeptide reads, in one-letter code: Copine family protein 5 (717 aa).

Positions 193-318 (YLGGIIVSAE…KYGPGSDNVY (126 aa)) constitute a C2 domain. The VWFA domain maps to 377–567 (ELDQRRFDGE…LNKSRIAETA (191 aa)).

This sequence belongs to the copine family.

The chain is Copine family protein 5 (cpna-5) from Caenorhabditis elegans.